A 151-amino-acid chain; its full sequence is Macrodomain Ter protein (151 aa).

It belongs to the MatP family. Homodimer.

The protein localises to the cytoplasm. In terms of biological role, required for spatial organization of the terminus region of the chromosome (Ter macrodomain) during the cell cycle. Prevents early segregation of duplicated Ter macrodomains during cell division. Binds specifically to matS, which is a 13 bp signature motif repeated within the Ter macrodomain. This is Macrodomain Ter protein from Yersinia enterocolitica serotype O:8 / biotype 1B (strain NCTC 13174 / 8081).